Consider the following 755-residue polypeptide: PWWP domain-containing protein 2A (755 aa).

Residues 1 to 15 show a composition bias toward low complexity; it reads MAAVAAEAAATAASP. The tract at residues 1-153 is disordered; that stretch reads MAAVAAEAAA…VPPAGGDSTV (153 aa). Residues 64 to 76 show a composition bias toward pro residues; sequence DEPPLPPPPPPPG. A phosphoserine mark is found at S81, S102, S116, and S119. The span at 112-126 shows a compositional bias: pro residues; sequence ELPPSPASPPEQPPA. The tract at residues 148-373 is interaction with HDAC1 and MTA1; sequence GGDSTVSQLI…KLKTDHKVDG (226 aa). K208 participates in a covalent cross-link: Glycyl lysine isopeptide (Lys-Gly) (interchain with G-Cter in SUMO2). 4 disordered regions span residues 282 to 301, 334 to 384, 400 to 562, and 578 to 626; these read YNQS…KRKM, KEIR…KRNA, KVSA…GSKN, and SSAS…SKEE. Basic residues predominate over residues 292 to 301; it reads RKIKRPKRKM. Composition is skewed to basic and acidic residues over residues 346–356 and 368–381; these read SKYEDKKRRNE and DHKV…ESQK. Positions 403 to 421 are enriched in polar residues; it reads AQANTSKAQLSTKKVLQSK. A compositionally biased stretch (basic and acidic residues) spans 422 to 444; sequence NMDHAKAREVLKIAKEKAQKKQN. The tract at residues 423–574 is interaction with the H2A.Z/H2AZ1; it reads MDHAKAREVL…SVYMTLNQKK (152 aa). A compositionally biased stretch (polar residues) spans 508-527; that stretch reads SRCTSTRSAGEAPSENQSPS. Over residues 593-603 the composition is skewed to low complexity; that stretch reads SSNSECSSSES. Residues 655-715 form the PWWP domain; the sequence is VGDIVWAKIY…LSQLSPFLEN (61 aa).

Component of a MTA1-specific subcomplex of the NuRD complex (M1HR), composed of PWWP2A, MTA1/2, HDAC1/2, and RBBP4/7 but does not contain CHD4 and MBD3. Interacts with MTA1; the interaction mediates the association of PWWP2A with the M1HR complex. Interacts with H2A.Z/H2AZ1. Interacts (via PWWP domain) with histone H3 trimethylated at 'Lys-36' (H3K36me3). Does not interact with CHD4 and MBD3. As to quaternary structure, interacts with MTA1 and with HDAC1 in a MTA1-dependent manner. Does not interact with CHD4 and MBD3.

The protein resides in the nucleus. Functionally, chromatin-binding protein that acts as an adapter between distinct nucleosome components (H3K36me3 or H2A.Z) and chromatin-modifying complexes, contributing to the regulation of the levels of histone acetylation at actively transcribed genes. Competes with CHD4 and MBD3 for interaction with MTA1 to form a NuRD subcomplex, preventing the formation of full NuRD complex (containing CHD4 and MBD3), leading to recruitment of HDACs to gene promoters resulting in turn in the deacetylation of nearby H3K27 and H2A.Z. Plays a role in facilitating transcriptional elongation and repression of spurious transcription initiation through regulation of histone acetylation. Essential for proper mitosis progression. The protein is PWWP domain-containing protein 2A (PWWP2A) of Homo sapiens (Human).